Consider the following 425-residue polypeptide: Pre-mRNA-splicing factor PRP46 (425 aa).

7 WD repeats span residues 111-151, 154-193, 196-235, 238-279, 281-320, 322-360, and 371-410; these read GHTG…LKVT, GHIM…VVRD, GTLS…CVLT, GHRG…KTLT, HKRN…TNFN, EALG…KFQK, and ESEK…TQDS.

This sequence belongs to the WD repeat PRL1/PRL2 family. Associated with the spliceosome.

The protein resides in the cytoplasm. Its subcellular location is the nucleus. Functionally, involved in pre-mRNA splicing and required for cell cycle progression at G2/M. This chain is Pre-mRNA-splicing factor PRP46 (PRP46), found in Eremothecium gossypii (strain ATCC 10895 / CBS 109.51 / FGSC 9923 / NRRL Y-1056) (Yeast).